We begin with the raw amino-acid sequence, 331 residues long: Eukaryotic translation initiation factor 2 subunit 2 (331 aa).

Disordered regions lie at residues 1 to 75 and 97 to 120; these read MSGD…DLNF and AIKDVKIESDAQEPAEPEDDLDIM. The residue at position 2 (Ser-2) is an N-acetylserine. Phosphoserine is present on residues Ser-2 and Ser-13. The span at 13 to 22 shows a compositional bias: basic residues; the sequence is SKKKKKKKKP. Thr-36 carries the phosphothreonine modification. The span at 40–51 shows a compositional bias: basic and acidic residues; that stretch reads ETKEVEPEPTEE. Ser-67 carries the phosphoserine modification. Residue Lys-102 forms a Glycyl lysine isopeptide (Lys-Gly) (interchain with G-Cter in SUMO2) linkage. Ser-105 bears the Phosphoserine mark. Positions 106 to 118 are enriched in acidic residues; sequence DAQEPAEPEDDLD. Ser-158 and Ser-216 each carry phosphoserine. Lys-263 and Lys-291 each carry N6-acetyllysine. Residues 279–303 form a C4-type zinc finger; it reads CHTCRSPDTILQKDTRLYFLQCETC.

This sequence belongs to the eIF-2-beta/eIF-5 family. As to quaternary structure, eukaryotic translation initiation factor 2 eIF2 is a heterotrimeric complex composed of an alpha (EIF2S1), a beta (EIF2S2) and a gamma (EIF2S3) chain. eIF2 is member of the 43S pre-initiation complex (43S PIC). eIF2 forms a complex with at least CELF1/CUGBP1, CALR, CALR3, EIF2S1, EIF2S2, HSP90B1 and HSPA5. Interacts with BZW2/5MP1. Interacts with EIF5.

It localises to the cytoplasm. Its subcellular location is the cytosol. Its function is as follows. Component of the eIF2 complex that functions in the early steps of protein synthesis by forming a ternary complex with GTP and initiator tRNA. This complex binds to a 40S ribosomal subunit, followed by mRNA binding to form the 43S pre-initiation complex (43S PIC). Junction of the 60S ribosomal subunit to form the 80S initiation complex is preceded by hydrolysis of the GTP bound to eIF2 and release of an eIF2-GDP binary complex. In order for eIF2 to recycle and catalyze another round of initiation, the GDP bound to eIF2 must exchange with GTP by way of a reaction catalyzed by eIF2B. The protein is Eukaryotic translation initiation factor 2 subunit 2 (Eif2s2) of Mus musculus (Mouse).